The following is a 54-amino-acid chain: Ovomucoid (54 aa).

The region spanning 4–54 (VDCSDYPKPACTVEYMPLCGSDNKTYGNKCNFCNAVVDSNGTLTLSHFGKC) is the Kazal-like domain. Cystine bridges form between cysteine 6–cysteine 36, cysteine 14–cysteine 33, and cysteine 22–cysteine 54. The N-linked (GlcNAc...) asparagine glycan is linked to asparagine 43.

Its subcellular location is the secreted. The protein is Ovomucoid of Anser canagicus (Emperor goose).